We begin with the raw amino-acid sequence, 84 residues long: MSLFSFFKNEEKPSSAARAKERLQVVIAHERGAVERPDYLPQLQRDLLEVIKKYVDISEDKLDIKVDCIGGLSTLEVNVELPDS.

This sequence belongs to the MinE family.

Its function is as follows. Prevents the cell division inhibition by proteins MinC and MinD at internal division sites while permitting inhibition at polar sites. This ensures cell division at the proper site by restricting the formation of a division septum at the midpoint of the long axis of the cell. This is Cell division topological specificity factor from Desulfotalea psychrophila (strain LSv54 / DSM 12343).